The following is a 330-amino-acid chain: tRNA(Ile)-lysidine synthase (330 aa).

Residue 31–36 (SGGQDS) participates in ATP binding.

This sequence belongs to the tRNA(Ile)-lysidine synthase family.

Its subcellular location is the cytoplasm. The enzyme catalyses cytidine(34) in tRNA(Ile2) + L-lysine + ATP = lysidine(34) in tRNA(Ile2) + AMP + diphosphate + H(+). Ligates lysine onto the cytidine present at position 34 of the AUA codon-specific tRNA(Ile) that contains the anticodon CAU, in an ATP-dependent manner. Cytidine is converted to lysidine, thus changing the amino acid specificity of the tRNA from methionine to isoleucine. The protein is tRNA(Ile)-lysidine synthase of Synechocystis sp. (strain ATCC 27184 / PCC 6803 / Kazusa).